Here is a 236-residue protein sequence, read N- to C-terminus: Leucyl/phenylalanyl-tRNA--protein transferase (236 aa).

This sequence belongs to the L/F-transferase family.

Its subcellular location is the cytoplasm. It catalyses the reaction N-terminal L-lysyl-[protein] + L-leucyl-tRNA(Leu) = N-terminal L-leucyl-L-lysyl-[protein] + tRNA(Leu) + H(+). The catalysed reaction is N-terminal L-arginyl-[protein] + L-leucyl-tRNA(Leu) = N-terminal L-leucyl-L-arginyl-[protein] + tRNA(Leu) + H(+). It carries out the reaction L-phenylalanyl-tRNA(Phe) + an N-terminal L-alpha-aminoacyl-[protein] = an N-terminal L-phenylalanyl-L-alpha-aminoacyl-[protein] + tRNA(Phe). Functionally, functions in the N-end rule pathway of protein degradation where it conjugates Leu, Phe and, less efficiently, Met from aminoacyl-tRNAs to the N-termini of proteins containing an N-terminal arginine or lysine. This Shewanella sp. (strain MR-4) protein is Leucyl/phenylalanyl-tRNA--protein transferase.